The sequence spans 209 residues: Octanoyltransferase (209 aa).

Positions 30 to 209 (DHEPEIIYLV…IQTEFNKIFK (180 aa)) constitute a BPL/LPL catalytic domain. Substrate is bound by residues 69–76 (RGGKFTFH), 143–145 (AIG), and 156–158 (GVA). Cysteine 174 acts as the Acyl-thioester intermediate in catalysis.

The protein belongs to the LipB family.

The protein localises to the cytoplasm. It catalyses the reaction octanoyl-[ACP] + L-lysyl-[protein] = N(6)-octanoyl-L-lysyl-[protein] + holo-[ACP] + H(+). Its pathway is protein modification; protein lipoylation via endogenous pathway; protein N(6)-(lipoyl)lysine from octanoyl-[acyl-carrier-protein]: step 1/2. Functionally, catalyzes the transfer of endogenously produced octanoic acid from octanoyl-acyl-carrier-protein onto the lipoyl domains of lipoate-dependent enzymes. Lipoyl-ACP can also act as a substrate although octanoyl-ACP is likely to be the physiological substrate. The polypeptide is Octanoyltransferase (Rickettsia peacockii (strain Rustic)).